A 108-amino-acid polypeptide reads, in one-letter code: UPF0235 protein MM_0822 (108 aa).

It belongs to the UPF0235 family.

This chain is UPF0235 protein MM_0822, found in Methanosarcina mazei (strain ATCC BAA-159 / DSM 3647 / Goe1 / Go1 / JCM 11833 / OCM 88) (Methanosarcina frisia).